A 526-amino-acid polypeptide reads, in one-letter code: MDTLGIFVLISYLGLSSAAGVHLGDLQQNLAANGSVVVSPLNTTDAFSVSINLSQSTVNNCPSLKNAESMALMELLTRLTAPCRYDRMVPPVVHNKDGEEVPMDIYARFYIYVMKNLDSSDLQFTVQGLLQLRYLDPRLAFSSYLPNRRQPIMGESELKKMLWVPHIFLTNEQASTVLGTSAKDELTSIYPNGTVLTSTRLQATLYCWMNFQKFPFDEQKCKTTLESWMYNTTLVQLHWETDNPVSFDKQLQLTEYNLIGSLYNESIRVSNESYMSHGSLEGNYSIISFTVLLTREVGYYVIDYFLPSIMIVTISWVSFWLQADQTPARTTLGCTTLLSFITLSLSQENNLMKVSYVTMSEVWFLVCTIFIFGSLVEFAFVNTIWRRNNDLQLKKRTTKYIVKSTFVPHLKKHRRHGYRRTDSTMSTMSTTSMDKTCGPNNTVITIETPIIIGGSLSREDSAISLDEQDETSTSESSDSSKEKPAQTFATMTPKEVSLWIDRKMRFVFPLSFIVFNALFWTLVYCL.

An N-terminal signal peptide occupies residues 1-18; the sequence is MDTLGIFVLISYLGLSSA. Topologically, residues 19 to 300 are extracellular; it reads AGVHLGDLQQ…VLLTREVGYY (282 aa). N-linked (GlcNAc...) asparagine glycans are attached at residues asparagine 33, asparagine 42, asparagine 52, asparagine 192, asparagine 231, asparagine 264, asparagine 271, and asparagine 283. The helical transmembrane segment at 301 to 321 threads the bilayer; the sequence is VIDYFLPSIMIVTISWVSFWL. At 322–327 the chain is on the cytoplasmic side; it reads QADQTP. Residues 328–347 traverse the membrane as a helical segment; that stretch reads ARTTLGCTTLLSFITLSLSQ. Residues 348–360 lie on the Extracellular side of the membrane; it reads ENNLMKVSYVTMS. The chain crosses the membrane as a helical span at residues 361-381; that stretch reads EVWFLVCTIFIFGSLVEFAFV. Over 382-505 the chain is Cytoplasmic; the sequence is NTIWRRNNDL…VSLWIDRKMR (124 aa). The interval 463–488 is disordered; sequence ISLDEQDETSTSESSDSSKEKPAQTF. The helical transmembrane segment at 506-526 threads the bilayer; that stretch reads FVFPLSFIVFNALFWTLVYCL.

It belongs to the ligand-gated ion channel (TC 1.A.9) family. In third-instar larvae, expressed in the principal cells of the excretory Malpighian tubules (at protein level). Also detected in the enterocytes of the copper cell region and the iron cell region of the larval midgut (at protein level). In the copper cell region expression is confined to the interstitial cells and in the iron cell region it is expressed in the anterior portion (at protein level). Expressed in the Malpighian tubules and the middle midgut of third instar larvae and adults.

It is found in the apical cell membrane. The protein localises to the cell projection. Its subcellular location is the microvillus membrane. The protein resides in the late endosome membrane. It localises to the lysosome membrane. It carries out the reaction chloride(in) = chloride(out). Ligand and pH-gated channel that mediates chloride transport primarily in the mid-gut and thereby functions in larval metabolism and fluid homeostasis. Channel opening is triggered by zinc binding or, to a lesser extent, an increase in extracellular pH. Zinc-dependent activity in the mid-gut is required for modulating Tor-dependent metabolic programs that promote larval feeding and systematic growth. It may therefore act as an intestinal zinc sensor that mediates larval growth and metabolism in response to micronutrient availability. Activates Tor signaling via its activity in maintaining lysosome homeostasis in interstitial cells and/or by its role in activating the release of insulin-like peptides in the brain after feeding, via an unknown mechanism. Functions in lysosome homeostasis by regulating chloride transport into enterocyte lysosomes to sustain V-ATPase function which maintains lysosomal acidification and consequently promotes Tor activation at the lysosome membrane. Also appears to play a role in regulating fluid secretion and osmotic homeostasis in Malpighian tubules in response to the pH of extracellular urine. This function is important for proper urine production during diuresis. This Drosophila melanogaster (Fruit fly) protein is pH-sensitive chloride channel 2.